The primary structure comprises 274 residues: 2,3,4,5-tetrahydropyridine-2,6-dicarboxylate N-succinyltransferase (274 aa).

Substrate contacts are provided by R107 and D144.

It belongs to the transferase hexapeptide repeat family. As to quaternary structure, homotrimer.

It localises to the cytoplasm. The catalysed reaction is (S)-2,3,4,5-tetrahydrodipicolinate + succinyl-CoA + H2O = (S)-2-succinylamino-6-oxoheptanedioate + CoA. It participates in amino-acid biosynthesis; L-lysine biosynthesis via DAP pathway; LL-2,6-diaminopimelate from (S)-tetrahydrodipicolinate (succinylase route): step 1/3. The protein is 2,3,4,5-tetrahydropyridine-2,6-dicarboxylate N-succinyltransferase of Paracoccus denitrificans (strain Pd 1222).